Reading from the N-terminus, the 533-residue chain is Purine-cytosine permease FCY2 (533 aa).

At 1-98 (MLEEGNNVYE…NAASMWFSAN (98 aa)) the chain is on the cytoplasmic side. Residue K16 forms a Glycyl lysine isopeptide (Lys-Gly) (interchain with G-Cter in ubiquitin) linkage. S18 carries the phosphoserine modification. Residues 99-119 (MVIASYALGALGPMVFGLNFG) form a helical membrane-spanning segment. Residues 120 to 121 (QS) are Extracellular-facing. Residues 122 to 141 (VLVIIFFNIMGLIFVAFFSV) traverse the membrane as a helical segment. Residues 142 to 198 (FGAELGLRQMILSRYLVGNVTARIFSLINVIACVGWGIVNTSVSAQLLNMVNEGSGH) lie on the Cytoplasmic side of the membrane. Positions 165–184 (IFSLINVIACVGWGIVNTSV) are surface seeking. A helical transmembrane segment spans residues 199–218 (VCPIWAGCLIIIGGTVLVTF). Residues 219-256 (FGYSVIHAYEKWSWVPNFAVFLVIIAQLSRSGKFKGGE) lie on the Extracellular side of the membrane. A helical transmembrane segment spans residues 257-276 (WVGGATTAGSVLSFGSSIFG). The Cytoplasmic portion of the chain corresponds to 277–300 (FAAGWTTYAADYTVYMPKSTNKYK). The helical transmembrane segment at 301-320 (IFFSLVAGLAFPLFFTMILG) threads the bilayer. Residues 321–347 (AASAMAALNDPTWKAYYDKNAMGGVIY) lie on the Extracellular side of the membrane. A helical transmembrane segment spans residues 348 to 367 (AILVPNSLNGFGQFCCVLLA). The Cytoplasmic portion of the chain corresponds to 368–398 (LSTIANNIPNMYTVALSAQALWAPLAKIPRV). The chain crosses the membrane as a helical span at residues 399 to 418 (VWTMAGNAATLGISIPATYY). The Extracellular segment spans residues 419–465 (FDGFMENFMDSIGYYLAIYIAISCSEHFFYRRSFSAYNIDDWDNWEH). Residues 466–485 (LPIGIAGTAALIVGAFGVAL) form a helical membrane-spanning segment. Over 486 to 533 (GMCQTYWVGEIGRLIGKYGGDIGFELGASWAFIIYNILRPLELKYFGR) the chain is Cytoplasmic.

The protein belongs to the purine-cytosine permease (2.A.39) family. Post-translationally, not N-glycosylated.

The protein resides in the membrane. In terms of biological role, this permease has a broad specificity towards purines, and also transport cytosine and 5-methylcytosine but neither uracil nor thymine. This is Purine-cytosine permease FCY2 (FCY2) from Saccharomyces cerevisiae (strain ATCC 204508 / S288c) (Baker's yeast).